A 181-amino-acid chain; its full sequence is MLDKSKKERKRNEIEPLINERIKYSQIRLIDTSGSQLGIYSSSEALTIALNAGLDLVLISEKSNPPVCRIIDYGKYKFAQEKKAKEAKKKQHNVTIKEVKMRYKIDVHDYNVRINQAFRFLQGGDKVKANVIFRGREIQHTKLAIELLNKMAQDLSHISEIQQPPAKDGKNMIMILSPKKI.

Belongs to the IF-3 family. In terms of assembly, monomer.

The protein localises to the plastid. The protein resides in the chloroplast. Its function is as follows. IF-3 binds to the 30S ribosomal subunit and shifts the equilibrium between 70S ribosomes and their 50S and 30S subunits in favor of the free subunits, thus enhancing the availability of 30S subunits on which protein synthesis initiation begins. This chain is Translation initiation factor IF-3, chloroplastic, found in Gracilaria tenuistipitata var. liui (Red alga).